The following is a 147-amino-acid chain: uncharacterized protein (147 aa).

A compositionally biased stretch (low complexity) spans 72-81 (ARAKPASRAP). A disordered region spans residues 72–147 (ARAKPASRAP…QGAAGRRLSP (76 aa)).

This is an uncharacterized protein from Homo sapiens (Human).